Consider the following 359-residue polypeptide: Phosphate acyltransferase (359 aa).

The interval 335–359 (SGAGGAATGSPETDAPNPHPDSRAA) is disordered.

The protein belongs to the PlsX family. As to quaternary structure, homodimer. Probably interacts with PlsY.

The protein localises to the cytoplasm. The catalysed reaction is a fatty acyl-[ACP] + phosphate = an acyl phosphate + holo-[ACP]. The protein operates within lipid metabolism; phospholipid metabolism. Its function is as follows. Catalyzes the reversible formation of acyl-phosphate (acyl-PO(4)) from acyl-[acyl-carrier-protein] (acyl-ACP). This enzyme utilizes acyl-ACP as fatty acyl donor, but not acyl-CoA. The sequence is that of Phosphate acyltransferase from Cupriavidus metallidurans (strain ATCC 43123 / DSM 2839 / NBRC 102507 / CH34) (Ralstonia metallidurans).